The following is a 419-amino-acid chain: Putative zinc metalloprotease spr0242 (419 aa).

Residue His18 participates in Zn(2+) binding. The active site involves Glu19. Position 22 (His22) interacts with Zn(2+). Helical transmembrane passes span 169–191, 345–367, and 388–410; these read LITN…WVLI, ILYF…IPAL, and EIET…AVTW.

Belongs to the peptidase M50B family. Zn(2+) is required as a cofactor.

The protein resides in the cell membrane. The sequence is that of Putative zinc metalloprotease spr0242 from Streptococcus pneumoniae (strain ATCC BAA-255 / R6).